Reading from the N-terminus, the 95-residue chain is Aspartyl/glutamyl-tRNA(Asn/Gln) amidotransferase subunit C (95 aa).

This sequence belongs to the GatC family. In terms of assembly, heterotrimer of A, B and C subunits.

The enzyme catalyses L-glutamyl-tRNA(Gln) + L-glutamine + ATP + H2O = L-glutaminyl-tRNA(Gln) + L-glutamate + ADP + phosphate + H(+). The catalysed reaction is L-aspartyl-tRNA(Asn) + L-glutamine + ATP + H2O = L-asparaginyl-tRNA(Asn) + L-glutamate + ADP + phosphate + 2 H(+). In terms of biological role, allows the formation of correctly charged Asn-tRNA(Asn) or Gln-tRNA(Gln) through the transamidation of misacylated Asp-tRNA(Asn) or Glu-tRNA(Gln) in organisms which lack either or both of asparaginyl-tRNA or glutaminyl-tRNA synthetases. The reaction takes place in the presence of glutamine and ATP through an activated phospho-Asp-tRNA(Asn) or phospho-Glu-tRNA(Gln). This is Aspartyl/glutamyl-tRNA(Asn/Gln) amidotransferase subunit C from Pseudomonas entomophila (strain L48).